Here is a 315-residue protein sequence, read N- to C-terminus: Methionyl-tRNA formyltransferase (315 aa).

Position 113-116 (113-116 (SLLP)) interacts with (6S)-5,6,7,8-tetrahydrofolate.

It belongs to the Fmt family.

The catalysed reaction is L-methionyl-tRNA(fMet) + (6R)-10-formyltetrahydrofolate = N-formyl-L-methionyl-tRNA(fMet) + (6S)-5,6,7,8-tetrahydrofolate + H(+). Attaches a formyl group to the free amino group of methionyl-tRNA(fMet). The formyl group appears to play a dual role in the initiator identity of N-formylmethionyl-tRNA by promoting its recognition by IF2 and preventing the misappropriation of this tRNA by the elongation apparatus. This is Methionyl-tRNA formyltransferase from Yersinia enterocolitica serotype O:8 / biotype 1B (strain NCTC 13174 / 8081).